Here is a 750-residue protein sequence, read N- to C-terminus: Polyribonucleotide nucleotidyltransferase (750 aa).

2 residues coordinate Mg(2+): Asp-492 and Asp-498. Residues 559–618 (PQLSVVEVNPEIIRVIIGPGGKNIKAITSATGASIDIEDSGRISIFAPTKESMDMAREMV) form the KH domain. The S1 motif domain occupies 628-695 (GKNYTAKVRK…NDGRVRASRK (68 aa)). The disordered stretch occupies residues 705–750 (EWDPADTARPPRKPRDRDDRGDRGGRGDRGDRGGRNGRGGDRRDRR). Basic and acidic residues predominate over residues 717-750 (KPRDRDDRGDRGGRGDRGDRGGRNGRGGDRRDRR).

This sequence belongs to the polyribonucleotide nucleotidyltransferase family. It depends on Mg(2+) as a cofactor.

Its subcellular location is the cytoplasm. The catalysed reaction is RNA(n+1) + phosphate = RNA(n) + a ribonucleoside 5'-diphosphate. Its function is as follows. Involved in mRNA degradation. Catalyzes the phosphorolysis of single-stranded polyribonucleotides processively in the 3'- to 5'-direction. This is Polyribonucleotide nucleotidyltransferase from Oleidesulfovibrio alaskensis (strain ATCC BAA-1058 / DSM 17464 / G20) (Desulfovibrio alaskensis).